The primary structure comprises 59 residues: UPF0181 protein YoaH (59 aa).

The protein belongs to the UPF0181 family.

The polypeptide is UPF0181 protein YoaH (Salmonella arizonae (strain ATCC BAA-731 / CDC346-86 / RSK2980)).